Reading from the N-terminus, the 523-residue chain is FAD-dependent monooxygenase drtC (523 aa).

In terms of domain architecture, FAD-binding PCMH-type spans 77 to 252 (TSLNSACIVL…TNFEVRAFPQ (176 aa)).

This sequence belongs to the oxygen-dependent FAD-linked oxidoreductase family. FAD is required as a cofactor.

Its pathway is secondary metabolite biosynthesis; terpenoid biosynthesis. Its function is as follows. FAD-dependent monooxygenase; part of the gene cluster that mediates the biosynthesis of various drimane-type sesquiterpene esters, compounds that exhibit diverse biological activities and are widely present in eukaryotes. The pathway begins with the synthesis of the backbone drimenol by the terpene cyclase drtB using farnesyl pyrophosphate (FPP) as substrate. The cytochrome P450 monooxygenase drtD is then responsible for the hydroxylations at C-6, C-9 and C-12, as well as the oxidation of hydroxyl groups at C-6 and C-11 to a ketone and an aldehyde, respectively. Then, the biosynthesis can go in two directions, either the hydroxylated drimenol is further hydroxylated at C-2 and C-3 by an enzyme(s) not associated with the drt cluster, or the FAD-binding oxidoreductase drtC further oxidizes C-11 or C-12 to form the butyrolactone ring. DrtB, drtD and drtC are solely responsible for the formation of the different drimane structures observed during drimane sesquiterpenes biosynthesis. The polyketide synthase drtA synthesizes different lengths (C6 and C8) of PKS chains, which are then oxidized to varying degrees by the short-chain dehydrogenase drtF. Finally, these PKS chains are transferred onto drimane sesquiterpenes by the acyltransferase drtE, forming the sesquiterpene esters. In addition to the different fatty acyl-CoA chains produced by drtA, drtE is also able to use cinnamoyl-CoA as a substrate. The chain is FAD-dependent monooxygenase drtC from Aspergillus calidoustus.